Consider the following 270-residue polypeptide: Thiazole synthase (270 aa).

K111 acts as the Schiff-base intermediate with DXP in catalysis. Residues G172, 198–199 (AG), and 220–221 (NT) contribute to the 1-deoxy-D-xylulose 5-phosphate site.

The protein belongs to the ThiG family. As to quaternary structure, homotetramer. Forms heterodimers with either ThiH or ThiS.

The protein localises to the cytoplasm. The enzyme catalyses [ThiS sulfur-carrier protein]-C-terminal-Gly-aminoethanethioate + 2-iminoacetate + 1-deoxy-D-xylulose 5-phosphate = [ThiS sulfur-carrier protein]-C-terminal Gly-Gly + 2-[(2R,5Z)-2-carboxy-4-methylthiazol-5(2H)-ylidene]ethyl phosphate + 2 H2O + H(+). It functions in the pathway cofactor biosynthesis; thiamine diphosphate biosynthesis. Its function is as follows. Catalyzes the rearrangement of 1-deoxy-D-xylulose 5-phosphate (DXP) to produce the thiazole phosphate moiety of thiamine. Sulfur is provided by the thiocarboxylate moiety of the carrier protein ThiS. In vitro, sulfur can be provided by H(2)S. This is Thiazole synthase from Methylococcus capsulatus (strain ATCC 33009 / NCIMB 11132 / Bath).